An 87-amino-acid polypeptide reads, in one-letter code: Sec-independent protein translocase protein TatA (87 aa).

The helical transmembrane segment at 1–21 threads the bilayer; the sequence is MGGMSITHWIVVAVVVMIFFG. Residues 40–87 are disordered; it reads KKGMSEDDTTPPAAPPAPAPRLENQPLPPENTTQNVAQNVPNDIKNNQ. A compositionally biased stretch (polar residues) spans 69–87; sequence ENTTQNVAQNVPNDIKNNQ.

This sequence belongs to the TatA/E family. In terms of assembly, the Tat system comprises two distinct complexes: a TatABC complex, containing multiple copies of TatA, TatB and TatC subunits, and a separate TatA complex, containing only TatA subunits. Substrates initially bind to the TatABC complex, which probably triggers association of the separate TatA complex to form the active translocon.

The protein resides in the cell inner membrane. Functionally, part of the twin-arginine translocation (Tat) system that transports large folded proteins containing a characteristic twin-arginine motif in their signal peptide across membranes. TatA could form the protein-conducting channel of the Tat system. This is Sec-independent protein translocase protein TatA from Zymomonas mobilis subsp. mobilis (strain ATCC 31821 / ZM4 / CP4).